The sequence spans 212 residues: Thymidylate kinase (212 aa).

9–16 (GIDGCGKT) contacts ATP.

Belongs to the thymidylate kinase family.

It catalyses the reaction dTMP + ATP = dTDP + ADP. In terms of biological role, phosphorylation of dTMP to form dTDP in both de novo and salvage pathways of dTTP synthesis. The polypeptide is Thymidylate kinase (Synechococcus sp. (strain CC9311)).